The chain runs to 538 residues: Putative cysteine ligase BshC (538 aa).

A coiled-coil region spans residues 460–484 (KINEQIELLERMLKRNVEKKHEVEL).

The protein belongs to the BshC family.

In terms of biological role, involved in bacillithiol (BSH) biosynthesis. May catalyze the last step of the pathway, the addition of cysteine to glucosamine malate (GlcN-Mal) to generate BSH. In Bacillus thuringiensis subsp. konkukian (strain 97-27), this protein is Putative cysteine ligase BshC.